Here is a 548-residue protein sequence, read N- to C-terminus: MAAKEIIFHDGARAKLVEGVNLLANAVKVTLGPKGRNVVLERSFGSPVVTKDGVSVAKEIELADKVQNIGAQLVKEVASKTSDAAGDGTTTATVLAQAIVREGQKYVAAGLNPLDLKRGIDKAVAAAVDELKKISKPTTTSKEIAQVATISANGEESIGQRIAEAIDRVGKEGVITVEDGKSLADELDVVEGLQFDRGYLSPYFINHPERQLAVLDEPFILLHDKKISNIRDLLPVLEQVAKAGRPLLIVAEDVEGEALATLVVNNIRGILKTVAVKAPGFGDRRKALLEDIAILTGGQVITEETGLTLEKATLQELGRAKRIEVGKENTTLIDGAGDKPNIDARVKQIRAQIAEATSDYDREKLQERVAKLAGGVAVIKVGGATEVEVKEKKDRVDDALHATRAAVEEGIVPGGGVALIRVKQAIAALAGANADQKAGISIVLRALEEPLRQIVANAGEEASVVVATVAAGQGNYGYNAATGEYGDLVESGVLDPTKVTRTALQNAASIAGLLLTTDATVHEAPKDAPPTAPAGVPGAGAGGPGFDF.

ATP is bound by residues 30–33, Lys-51, 87–91, Gly-415, 479–481, and Asp-495; these read TLGP, DGTTT, and NAA. A disordered region spans residues 524–548; it reads APKDAPPTAPAGVPGAGAGGPGFDF. Positions 537-548 are enriched in gly residues; the sequence is PGAGAGGPGFDF.

The protein belongs to the chaperonin (HSP60) family. Forms a cylinder of 14 subunits composed of two heptameric rings stacked back-to-back. Interacts with the co-chaperonin GroES.

The protein localises to the cytoplasm. The catalysed reaction is ATP + H2O + a folded polypeptide = ADP + phosphate + an unfolded polypeptide.. Its function is as follows. Together with its co-chaperonin GroES, plays an essential role in assisting protein folding. The GroEL-GroES system forms a nano-cage that allows encapsulation of the non-native substrate proteins and provides a physical environment optimized to promote and accelerate protein folding. The polypeptide is Chaperonin GroEL 2 (Burkholderia pseudomallei (strain 668)).